A 499-amino-acid chain; its full sequence is Probable cytosol aminopeptidase (499 aa).

The Mn(2+) site is built by Lys-267 and Asp-272. Residue Lys-279 is part of the active site. Mn(2+) contacts are provided by Asp-290, Asp-349, and Glu-351. Residue Arg-353 is part of the active site.

This sequence belongs to the peptidase M17 family. It depends on Mn(2+) as a cofactor.

The protein localises to the cytoplasm. It catalyses the reaction Release of an N-terminal amino acid, Xaa-|-Yaa-, in which Xaa is preferably Leu, but may be other amino acids including Pro although not Arg or Lys, and Yaa may be Pro. Amino acid amides and methyl esters are also readily hydrolyzed, but rates on arylamides are exceedingly low.. The catalysed reaction is Release of an N-terminal amino acid, preferentially leucine, but not glutamic or aspartic acids.. In terms of biological role, presumably involved in the processing and regular turnover of intracellular proteins. Catalyzes the removal of unsubstituted N-terminal amino acids from various peptides. The protein is Probable cytosol aminopeptidase of Buchnera aphidicola subsp. Acyrthosiphon pisum (strain Tuc7).